A 100-amino-acid chain; its full sequence is Large ribosomal subunit protein uL23 (100 aa).

It belongs to the universal ribosomal protein uL23 family. Part of the 50S ribosomal subunit. Contacts protein L29, and trigger factor when it is bound to the ribosome.

In terms of biological role, one of the early assembly proteins it binds 23S rRNA. One of the proteins that surrounds the polypeptide exit tunnel on the outside of the ribosome. Forms the main docking site for trigger factor binding to the ribosome. This chain is Large ribosomal subunit protein uL23, found in Thermosynechococcus vestitus (strain NIES-2133 / IAM M-273 / BP-1).